Consider the following 237-residue polypeptide: Phosphoribosylaminoimidazole-succinocarboxamide synthase (237 aa).

The protein belongs to the SAICAR synthetase family.

It catalyses the reaction 5-amino-1-(5-phospho-D-ribosyl)imidazole-4-carboxylate + L-aspartate + ATP = (2S)-2-[5-amino-1-(5-phospho-beta-D-ribosyl)imidazole-4-carboxamido]succinate + ADP + phosphate + 2 H(+). Its pathway is purine metabolism; IMP biosynthesis via de novo pathway; 5-amino-1-(5-phospho-D-ribosyl)imidazole-4-carboxamide from 5-amino-1-(5-phospho-D-ribosyl)imidazole-4-carboxylate: step 1/2. The sequence is that of Phosphoribosylaminoimidazole-succinocarboxamide synthase from Klebsiella pneumoniae (strain 342).